Reading from the N-terminus, the 2963-residue chain is tRNA nuclease CdiA (2963 aa).

The signal sequence occupies residues 1–29; the sequence is MIPIYLRQKLISYALIYLVAIQPIMPVMA. The interval 35–320 is two-partner system transport domain (TPS); the sequence is AQGSTALDKA…AQGNITLNSH (286 aa). Residues 573 to 1074 are FHA-1; it reads GNVVAQEHAQ…MVLNTASLLN (502 aa). The tract at residues 1075-1342 is receptor binding domain (RBD); that stretch reads RRDGFSVTEK…KPLTRAQLSD (268 aa). Residues 1343–1528 are YP domain; the sequence is YPLPDSNNGL…LAKAEQAHLQ (186 aa). The periplasmic FHA-1 repeat (pFR) stretch occupies residues 1529-1751; it reads GSVISGNKVE…ATLQAERDVN (223 aa). Basic and acidic residues predominate over residues 1759-1770; sequence TRNQHIDSEDKT. Disordered regions lie at residues 1759 to 1787 and 1992 to 2012; these read TRNQHIDSEDKTTGYTRSTLSSGGDLTAS and SKSSRQQINQEGSKQSESASA. The FHA-2 stretch occupies residues 1762–2314; it reads QHIDSEDKTT…DSDNYNSIQK (553 aa). Polar residues predominate over residues 1771-1782; the sequence is TGYTRSTLSSGG. Residues 2694-2697 carry the VEDN CT cleavage motif motif; it reads VEDN. Residues 2694–2963 are C-terminal effector domain (CT); it reads VEDNNLSFGK…TGRVRNFHPN (270 aa).

This sequence in the N-terminal section; belongs to the CdiA toxin family. In the C-terminal section; belongs to the bacterial EndoU family. Forms a 1:1 complex with cognate immunity protein CdiI.

The protein localises to the secreted. It localises to the target cell. The protein resides in the target cell cytoplasm. Its function is as follows. Toxic component of a toxin-immunity protein module, which functions as a cellular contact-dependent growth inhibition (CDI) system. CDI modules allow bacteria to communicate with and inhibit the growth of closely related neighboring bacteria in a contact-dependent fashion. Targeting of the CT domain (residues 2824-2963) in the absence of immunity protein inhibits cell growth and causes tRNA(UUC-Glu) cleavage in the anticodon loop; expression of cognate immunity protein CdiI-43969 neutralizes growth inhibition and tRNA(UUC-Glu) remains intact, whereas non-cognate immunity proteins do not confer protection from the toxic effects. The CdiA protein is thought to be exported from the cell through the central lumen of CdiB, the other half of its two-partner system (TPS). The TPS domain probably remains associated with CdiB while the FHA-1 domain forms an extended filament with the receptor-binding domain (RBD) at its extremity; in the secretion arrested state the C-terminus of the RBD and YP domains form a hairpin-like structure as the FHA-2, PT and CT domains are periplasmic. The YP domain is probably responsible for this arrest at the point where it re-enters the host cell periplasm. Upon binding to a target cell outer membrane receptor a signal is transmitted to activate secretion. The filament elongates slightly, the rest of CdiA is secreted and the FHA-2 domain becomes stably associated with the target cell's outer membrane where it facilitates entry of the toxic CT domain into the target cell periplasm. From there the toxic CT domain is cleaved and gains access to the target cell cytoplasm via an inner membrane protein. This Yersinia mollaretii (strain ATCC 43969 / DSM 18520 / CIP 103324 / CNY 7263 / WAIP 204) protein is tRNA nuclease CdiA.